Here is a 934-residue protein sequence, read N- to C-terminus: Sorting nexin-14 (934 aa).

2 consecutive transmembrane segments (helical) span residues 27–47 and 48–68; these read YPVIFCIFTVMISSTIILNQY and LHILMVFWSFLAGVITFYCSL. A PXA domain is found at 129–303; the sequence is PSKVDASISE…MVLIFIDDSP (175 aa). Residues 335–467 form the RGS domain; the sequence is DLKEIREQQD…CHSDEYFRHL (133 aa). In terms of domain architecture, PX spans 557–677; it reads WTISIPYVDF…DFLSPFSMES (121 aa).

Belongs to the sorting nexin family.

Its subcellular location is the lysosome membrane. The protein localises to the late endosome membrane. It is found in the cell projection. It localises to the dendrite. Plays a role in maintaining normal neuronal excitability and synaptic transmission. May be involved in several stages of intracellular trafficking. Required for autophagosome clearance, possibly by mediating the fusion of lysosomes with autophagosomes. Binds phosphatidylinositol 3,5-bisphosphate (PtdIns(3,5)P2), a key component of late endosomes/lysosomes. Does not bind phosphatidylinositol 3-phosphate (PtdIns(3P)). The polypeptide is Sorting nexin-14 (Danio rerio (Zebrafish)).